Here is a 279-residue protein sequence, read N- to C-terminus: Tetra-spanning protein 1 (279 aa).

2 helical membrane passes run 25–45 (VWFS…LQAI) and 50–70 (APPF…AIVL). Asn77 carries N-linked (GlcNAc...) asparagine glycosylation. A helical transmembrane segment spans residues 100 to 122 (YFILALSMLIDRPILFSLAPYAI). The N-linked (GlcNAc...) asparagine glycan is linked to Asn143. Residues 172–192 (MQLVASLETFLLFRLFFGVFL) form a helical membrane-spanning segment. Positions 260–279 (VGTAQSRPTASSSTTAPSST) are disordered. The span at 262-279 (TAQSRPTASSSTTAPSST) shows a compositional bias: low complexity.

It belongs to the PER33/POM33 family. In terms of assembly, interacts with RTN1 and YOP1.

The protein resides in the golgi apparatus membrane. It is found in the endoplasmic reticulum membrane. Its subcellular location is the nucleus membrane. Its function is as follows. Required for the correct positioning of the cellular division plane by delimiting the actomyosin ring assembly at the cell equator. The protein is Tetra-spanning protein 1 (tts1) of Schizosaccharomyces pombe (strain 972 / ATCC 24843) (Fission yeast).